A 558-amino-acid polypeptide reads, in one-letter code: Receptor-like kinase LIP2 (558 aa).

Residues 1–45 form a disordered region; that stretch reads MHCFPCFSSPKNKKSSTTNETNDNNEPKPDDRRRAEETEEIEQSE. Positions 15-24 are enriched in low complexity; the sequence is SSTTNETNDN. Positions 25 to 36 are enriched in basic and acidic residues; it reads NEPKPDDRRRAE. The residue at position 53 (Thr-53) is a Phosphothreonine. Residues 64 to 343 form the Protein kinase domain; it reads FRQECLLGEG…SDVMVALSFL (280 aa). Residues 70-78 and Lys-93 contribute to the ATP site; that span reads LGEGGFGRV. Tyr-138 bears the Phosphotyrosine mark. Catalysis depends on Asp-191, which acts as the Proton acceptor. Residues Ser-195 and Ser-227 each carry the phosphoserine modification. Thr-233 carries the phosphothreonine modification. Tyr-241 carries the phosphotyrosine modification. Residues 372-558 are disordered; it reads HDSNLVSPPP…SDVAIDSIKE (187 aa). Positions 401-418 are enriched in basic and acidic residues; that stretch reads ESEKESVSKNEYKKKHEE. The span at 419-431 shows a compositional bias: acidic residues; it reads EDSSMESDDESDS. The segment covering 432–448 has biased composition (basic and acidic residues); the sequence is NSEHEKDQPPKPIDEKN. The span at 473-486 shows a compositional bias: low complexity; it reads SKSSQKSNDESTSS. 3 stretches are compositionally biased toward basic and acidic residues: residues 488–500, 508–524, and 547–558; these read YDSD…KGKE, EEKH…KTDD, and IKSDVAIDSIKE.

Belongs to the protein kinase superfamily. Ser/Thr protein kinase family. Interacts with PRK6. Palmitoylated. As to expression, expressed in mature pollen and in germinating pollen tubes.

The protein localises to the cell membrane. Involved in pollen tube guidance into micropyle. Participates in perception of the ovule-secreted peptide signal LURE1. This Arabidopsis thaliana (Mouse-ear cress) protein is Receptor-like kinase LIP2.